Consider the following 668-residue polypeptide: Putative ankyrin repeat protein FPV244 (668 aa).

12 ANK repeats span residues 40–69, 144–173, 177–206, 210–239, 272–302, 306–336, 340–370, 374–403, 407–437, 441–471, 473–502, and 571–602; these read IPFT…KLIY, EYMK…DVNA, YCRT…DVNI, DDLS…NINK, YKNT…DVNA, KGET…DVNA, LYIT…NVNA, CDKT…DIEA, KIGT…NVNS, YLST…DVNA, NIRN…ELRD, and NMFY…EINT.

The sequence is that of Putative ankyrin repeat protein FPV244 from Vertebrata (FPV).